We begin with the raw amino-acid sequence, 423 residues long: CinA-like protein (423 aa).

This sequence belongs to the CinA family.

This Chlorobaculum tepidum (strain ATCC 49652 / DSM 12025 / NBRC 103806 / TLS) (Chlorobium tepidum) protein is CinA-like protein.